The chain runs to 563 residues: Lengsin (563 aa).

The disordered stretch occupies residues 1–115; it reads MTDEGDLAQE…PNTDPTRYNA (115 aa). Residues 26–37 show a composition bias toward basic residues; sequence SKLRRARRKVTK. Composition is skewed to polar residues over residues 51-62 and 105-115; these read ANSSEMSRNQIA and SPNTDPTRYNA. Residues 137–231 enclose the GS beta-grasp domain; that stretch reads NHLQFVRFEA…VICDTFTVTG (95 aa). Residues 238–563 enclose the GS catalytic domain; sequence PRYIAKRQLR…EGNKFLEYFI (326 aa).

Belongs to the glutamine synthetase family. Dodecamer. Interacts with BFSP2 and VIM. In terms of tissue distribution, expressed in lens.

Its function is as follows. May act as a component of the cytoskeleton or as a chaperone for the reorganization of intermediate filament proteins during terminal differentiation in the lens. Does not seem to have enzymatic activity. The chain is Lengsin (Lgsn) from Mus musculus (Mouse).